A 667-amino-acid polypeptide reads, in one-letter code: Soluble guanylate cyclase 89Da (667 aa).

A heme-binding site is contributed by H104. Residues 337–364 (AQEFSESHPVDDDESAREDEIDPATGER) are disordered. Acidic residues predominate over residues 347–358 (DDDESAREDEID). A coiled-coil region spans residues 427–455 (QHCSKLEIMFEKEEQRSDELEKSLELADS). The 127-residue stretch at 491–617 (SVIFLEVMNV…DTVNTASRME (127 aa)) folds into the Guanylate cyclase domain.

The protein belongs to the adenylyl cyclase class-4/guanylyl cyclase family. As to quaternary structure, heterodimer; with Gyc88E, in the presence of magnesium or manganese. Requires heme as cofactor.

The protein localises to the cytoplasm. It carries out the reaction GTP = 3',5'-cyclic GMP + diphosphate. With respect to regulation, probably not activated by nitric oxide (NO). Heterodimer also exhibits some stimulation, some compounds (SIN-1 and two of the NONOates) that were ineffective at stimulating Gyc-88E alone did stimulate the heterodimer. Functionally, heterodimers with Gyc-89Da and Gyc-89Db are activated in response to changing oxygen concentrations, alerting flies to hypoxic environments. Under normal oxygen concentrations, oxygen binds to the heme group and results in low levels of guanylyl cyclase activity. When exposed to reduced oxygen concentrations, the oxygen dissociates from the heme group resulting in activation of the enzyme. The chain is Soluble guanylate cyclase 89Da from Drosophila melanogaster (Fruit fly).